We begin with the raw amino-acid sequence, 235 residues long: 5'-methylthioadenosine/S-adenosylhomocysteine nucleosidase (235 aa).

Glutamate 12 (proton acceptor) is an active-site residue. Substrate contacts are provided by residues glycine 78, isoleucine 152, and 173–174 (ME). Aspartate 197 serves as the catalytic Proton donor.

It belongs to the PNP/UDP phosphorylase family. MtnN subfamily. Homodimer.

It catalyses the reaction S-adenosyl-L-homocysteine + H2O = S-(5-deoxy-D-ribos-5-yl)-L-homocysteine + adenine. It carries out the reaction S-methyl-5'-thioadenosine + H2O = 5-(methylsulfanyl)-D-ribose + adenine. The enzyme catalyses 5'-deoxyadenosine + H2O = 5-deoxy-D-ribose + adenine. Its pathway is amino-acid biosynthesis; L-methionine biosynthesis via salvage pathway; S-methyl-5-thio-alpha-D-ribose 1-phosphate from S-methyl-5'-thioadenosine (hydrolase route): step 1/2. Functionally, catalyzes the irreversible cleavage of the glycosidic bond in both 5'-methylthioadenosine (MTA) and S-adenosylhomocysteine (SAH/AdoHcy) to adenine and the corresponding thioribose, 5'-methylthioribose and S-ribosylhomocysteine, respectively. Also cleaves 5'-deoxyadenosine, a toxic by-product of radical S-adenosylmethionine (SAM) enzymes, into 5-deoxyribose and adenine. Thus, is required for in vivo function of the radical SAM enzymes biotin synthase and lipoic acid synthase, that are inhibited by 5'-deoxyadenosine accumulation. This chain is 5'-methylthioadenosine/S-adenosylhomocysteine nucleosidase, found in Proteus mirabilis (strain HI4320).